We begin with the raw amino-acid sequence, 226 residues long: Putative ABC transporter ATP-binding protein BH02760 (226 aa).

In terms of domain architecture, ABC transporter spans 4 to 222 (IKFDKVTQVF…IPLVAIKEYI (219 aa)). Residue 35–42 (GANGSGKS) participates in ATP binding.

It belongs to the ABC transporter superfamily.

The protein resides in the cell inner membrane. In terms of biological role, probably part of an ABC transporter complex. Responsible for energy coupling to the transport system. The polypeptide is Putative ABC transporter ATP-binding protein BH02760 (Bartonella henselae (strain ATCC 49882 / DSM 28221 / CCUG 30454 / Houston 1) (Rochalimaea henselae)).